The following is a 106-amino-acid chain: Integration host factor subunit alpha (106 aa).

The protein belongs to the bacterial histone-like protein family. In terms of assembly, heterodimer of an alpha and a beta chain.

Its function is as follows. This protein is one of the two subunits of integration host factor, a specific DNA-binding protein that functions in genetic recombination as well as in transcriptional and translational control. This Nitrobacter winogradskyi (strain ATCC 25391 / DSM 10237 / CIP 104748 / NCIMB 11846 / Nb-255) protein is Integration host factor subunit alpha.